A 285-amino-acid chain; its full sequence is Probable fructose-bisphosphate aldolase (285 aa).

Position 50 (Ser50) interacts with D-glyceraldehyde 3-phosphate. The active-site Proton donor is the Asp85. The Zn(2+) site is built by His86, Asp107, Glu137, and His181. Gly182 is a dihydroxyacetone phosphate binding site. A Zn(2+)-binding site is contributed by His209. Dihydroxyacetone phosphate contacts are provided by residues 210-212 (GGT) and 231-234 (NVNT). Residues Thr212 and Thr234 each carry the phosphothreonine modification.

Belongs to the class II fructose-bisphosphate aldolase family. Zn(2+) serves as cofactor. Post-translationally, phosphorylated during sporulation.

The enzyme catalyses beta-D-fructose 1,6-bisphosphate = D-glyceraldehyde 3-phosphate + dihydroxyacetone phosphate. Its pathway is carbohydrate degradation; glycolysis; D-glyceraldehyde 3-phosphate and glycerone phosphate from D-glucose: step 4/4. Functionally, catalyzes the aldol condensation of dihydroxyacetone phosphate (DHAP or glycerone-phosphate) with glyceraldehyde 3-phosphate (G3P) to form fructose 1,6-bisphosphate (FBP) in gluconeogenesis and the reverse reaction in glycolysis. The protein is Probable fructose-bisphosphate aldolase (fbaA) of Bacillus subtilis (strain 168).